The sequence spans 305 residues: GMP synthase [glutamine-hydrolyzing] subunit B (305 aa).

The GMPS ATP-PPase domain maps to V2–R184. Residue S29–S35 participates in ATP binding.

In terms of assembly, heterodimer composed of a glutamine amidotransferase subunit (A) and a GMP-binding subunit (B).

The enzyme catalyses XMP + L-glutamine + ATP + H2O = GMP + L-glutamate + AMP + diphosphate + 2 H(+). Its pathway is purine metabolism; GMP biosynthesis; GMP from XMP (L-Gln route): step 1/1. Its function is as follows. Catalyzes the synthesis of GMP from XMP. This chain is GMP synthase [glutamine-hydrolyzing] subunit B, found in Methanosphaerula palustris (strain ATCC BAA-1556 / DSM 19958 / E1-9c).